A 285-amino-acid polypeptide reads, in one-letter code: tRNA pseudouridine synthase A (285 aa).

Aspartate 69 (nucleophile) is an active-site residue. A substrate-binding site is contributed by tyrosine 127.

Belongs to the tRNA pseudouridine synthase TruA family. In terms of assembly, homodimer.

It catalyses the reaction uridine(38/39/40) in tRNA = pseudouridine(38/39/40) in tRNA. In terms of biological role, formation of pseudouridine at positions 38, 39 and 40 in the anticodon stem and loop of transfer RNAs. In Pseudomonas aeruginosa (strain ATCC 15692 / DSM 22644 / CIP 104116 / JCM 14847 / LMG 12228 / 1C / PRS 101 / PAO1), this protein is tRNA pseudouridine synthase A.